Here is an 896-residue protein sequence, read N- to C-terminus: Translation initiation factor IF-2 (896 aa).

Basic and acidic residues predominate over residues 93 to 219; the sequence is VKRDPQEAER…RMAEENEKNW (127 aa). The segment at 93–307 is disordered; that stretch reads VKRDPQEAER…GSALQQGFQK (215 aa). The span at 256 to 271 shows a compositional bias: basic residues; that stretch reads GRSRSSKAARPAKKGN. Positions 272-285 are enriched in basic and acidic residues; that stretch reads KHAESKADREEARA. The tr-type G domain maps to 395–564; it reads PRAPVVTIMG…LLQAEVLELK (170 aa). The tract at residues 404–411 is G1; the sequence is GHVDHGKT. 404–411 is a binding site for GTP; the sequence is GHVDHGKT. Positions 429–433 are G2; it reads GITQH. Residues 450 to 453 are G3; it reads DTPG. GTP-binding positions include 450-454 and 504-507; these read DTPGH and NKID. Positions 504–507 are G4; sequence NKID. The interval 540 to 542 is G5; sequence SAK.

The protein belongs to the TRAFAC class translation factor GTPase superfamily. Classic translation factor GTPase family. IF-2 subfamily.

The protein resides in the cytoplasm. One of the essential components for the initiation of protein synthesis. Protects formylmethionyl-tRNA from spontaneous hydrolysis and promotes its binding to the 30S ribosomal subunits. Also involved in the hydrolysis of GTP during the formation of the 70S ribosomal complex. The polypeptide is Translation initiation factor IF-2 (Klebsiella pneumoniae (strain 342)).